Reading from the N-terminus, the 271-residue chain is ATP synthase subunit a (271 aa).

5 consecutive transmembrane segments (helical) span residues 38–58 (FWTLNIDSMFFSVVLGLLFLA), 100–120 (LIAPLALTVFVWVFLMNLMDL), 146–166 (DVNITLSMALGVFILILFYSI), 220–240 (LIFILIAGLLPWWSQWILNVP), and 242–262 (AIFHILIITLQAFIFMVLTIV).

The protein belongs to the ATPase A chain family. F-type ATPases have 2 components, CF(1) - the catalytic core - and CF(0) - the membrane proton channel. CF(1) has five subunits: alpha(3), beta(3), gamma(1), delta(1), epsilon(1). CF(0) has three main subunits: a(1), b(2) and c(9-12). The alpha and beta chains form an alternating ring which encloses part of the gamma chain. CF(1) is attached to CF(0) by a central stalk formed by the gamma and epsilon chains, while a peripheral stalk is formed by the delta and b chains.

Its subcellular location is the cell inner membrane. Key component of the proton channel; it plays a direct role in the translocation of protons across the membrane. This chain is ATP synthase subunit a, found in Enterobacter sp. (strain 638).